Reading from the N-terminus, the 293-residue chain is uncharacterized protein (293 aa).

One can recognise an HTH lysR-type domain in the interval 1 to 58; that stretch reads MQLQELHMLVVLAEELNMRKAAERLFVSQPALSQRLQTIEKAWGTKIFLRSQKGLTVT. The H-T-H motif DNA-binding region spans 18–37; sequence MRKAAERLFVSQPALSQRLQ.

The protein belongs to the LysR transcriptional regulatory family.

This is an uncharacterized protein from Bacillus subtilis (strain 168).